Consider the following 830-residue polypeptide: Periplasmic nitrate reductase (830 aa).

The tat-type signal signal peptide spans 1-30 (MTTRREFIKRSAAVTAACTAGISLSGEASN). Residues 40–96 (LKWSKAPCRFCGTGCSVNVAVKDNQVVATHGDIQSEVNRGLNCVKGYFLSKIMYGKD) enclose the 4Fe-4S Mo/W bis-MGD-type domain. Positions 47, 50, 54, and 82 each coordinate [4Fe-4S] cluster. Mo-bis(molybdopterin guanine dinucleotide) is bound by residues Lys-84, Gln-151, Asn-176, Cys-180, 213-220 (WGSNMAEM), 244-248 (STFQH), Met-374, Gln-378, Asn-484, 510-511 (SE), Lys-533, Asp-560, and 720-729 (TGRVLEHWHS). Trp-796 is a binding site for substrate. Mo-bis(molybdopterin guanine dinucleotide) is bound by residues Asn-804 and Lys-821.

Belongs to the prokaryotic molybdopterin-containing oxidoreductase family. NasA/NapA/NarB subfamily. In terms of assembly, component of the periplasmic nitrate reductase NapAB complex composed of NapA and NapB. [4Fe-4S] cluster is required as a cofactor. Mo-bis(molybdopterin guanine dinucleotide) serves as cofactor. Post-translationally, predicted to be exported by the Tat system. The position of the signal peptide cleavage has not been experimentally proven.

It is found in the periplasm. It carries out the reaction 2 Fe(II)-[cytochrome] + nitrate + 2 H(+) = 2 Fe(III)-[cytochrome] + nitrite + H2O. In terms of biological role, catalytic subunit of the periplasmic nitrate reductase complex NapAB. Receives electrons from NapB and catalyzes the reduction of nitrate to nitrite. The chain is Periplasmic nitrate reductase from Hahella chejuensis (strain KCTC 2396).